The following is a 219-amino-acid chain: ATP-dependent dethiobiotin synthetase BioD (219 aa).

12-17 is an ATP binding site; it reads GVGKTI. T16 serves as a coordination point for Mg(2+). K32 is a catalytic residue. ATP is bound by residues D43 and 96 to 99; that span reads ETSG. Residues D43 and E96 each contribute to the Mg(2+) site.

It belongs to the dethiobiotin synthetase family. Homodimer. The cofactor is Mg(2+).

It localises to the cytoplasm. It catalyses the reaction (7R,8S)-7,8-diammoniononanoate + CO2 + ATP = (4R,5S)-dethiobiotin + ADP + phosphate + 3 H(+). Its pathway is cofactor biosynthesis; biotin biosynthesis; biotin from 7,8-diaminononanoate: step 1/2. Catalyzes a mechanistically unusual reaction, the ATP-dependent insertion of CO2 between the N7 and N8 nitrogen atoms of 7,8-diaminopelargonic acid (DAPA, also called 7,8-diammoniononanoate) to form a ureido ring. The protein is ATP-dependent dethiobiotin synthetase BioD of Chlamydia pneumoniae (Chlamydophila pneumoniae).